Here is a 558-residue protein sequence, read N- to C-terminus: Polypeptide N-acetylgalactosaminyltransferase 16 (558 aa).

Topologically, residues 1 to 6 (MRKIRA) are cytoplasmic. Residues 7–26 (NAIAILTVAWILGTFYYLWQ) traverse the membrane as a helical; Signal-anchor for type II membrane protein segment. The Lumenal portion of the chain corresponds to 27–558 (DNRAHAASSS…AQQWQLLPHT (532 aa)). Over residues 34-46 (SSSGRGAQRAGGR) the composition is skewed to low complexity. The disordered stretch occupies residues 34 to 53 (SSSGRGAQRAGGRPEQLRED). 5 disulfides stabilise this stretch: Cys113-Cys340, Cys331-Cys409, Cys441-Cys460, Cys486-Cys506, and Cys530-Cys543. Residues 122-227 (LPATSVIITF…VEWLQPMLQR (106 aa)) are catalytic subdomain A. Substrate-binding residues include Asp163 and Arg188. A Mn(2+)-binding site is contributed by Asp211. Ser212 contributes to the substrate binding site. His213 is a binding site for Mn(2+). Residues 286–348 (PIRTPVIAGG…PCSRVGHVFR (63 aa)) form a catalytic subdomain B region. Trp317 lines the substrate pocket. Residue His345 coordinates Mn(2+). Residues Arg348, His351, and Tyr353 each contribute to the substrate site. The Ricin B-type lectin domain occupies 428–555 (KEVLPGVIKQ…DAQAQQWQLL (128 aa)).

This sequence belongs to the glycosyltransferase 2 family. GalNAc-T subfamily. The cofactor is Mn(2+). As to expression, in the CNS, it is predominantly expressed in several distinct hypothalamic, thalamic and amygdaloid nuclei. The most abundant level of expression is in the paraventricular, ventromedial and arcuate nuclei of the hypothalamus, the anterodorsal and parafascicular nuclei of the thalamus and the central, basomedial and medial nuclei of the amygdala. Also expressed in cerebral cortex, lateral septum, habenula and hippocampus.

The protein localises to the golgi apparatus membrane. It catalyses the reaction L-seryl-[protein] + UDP-N-acetyl-alpha-D-galactosamine = a 3-O-[N-acetyl-alpha-D-galactosaminyl]-L-seryl-[protein] + UDP + H(+). The catalysed reaction is L-threonyl-[protein] + UDP-N-acetyl-alpha-D-galactosamine = a 3-O-[N-acetyl-alpha-D-galactosaminyl]-L-threonyl-[protein] + UDP + H(+). The protein operates within protein modification; protein glycosylation. Its function is as follows. Catalyzes the initial reaction in O-linked oligosaccharide biosynthesis, the transfer of an N-acetyl-D-galactosamine residue to a serine or threonine residue on the protein receptor. This chain is Polypeptide N-acetylgalactosaminyltransferase 16 (Galnt16), found in Mus musculus (Mouse).